A 794-amino-acid chain; its full sequence is Protein argonaute-4 (794 aa).

Residues 152 to 271 (PIIEFMCEVL…LPLEVCNIVA (120 aa)) enclose the PAZ domain. Positions 442-753 (LIVVILPGKT…VAFRARYHLV (312 aa)) constitute a Piwi domain. The disordered stretch occupies residues 758-779 (DSAEGSHVSGQSNGRDPQALAK).

It belongs to the argonaute family. Ago subfamily.

The protein localises to the cytoplasm. It localises to the P-body. Required for RNA-mediated gene silencing (RNAi). Binds to short RNAs such as microRNAs (miRNAs) and represses the translation of mRNAs which are complementary to them. Lacks endonuclease activity and does not appear to cleave target mRNAs. The sequence is that of Protein argonaute-4 (AGO4) from Gallus gallus (Chicken).